The following is a 799-amino-acid chain: LPS-assembly protein LptD (799 aa).

The first 34 residues, 1 to 34 (MMHELDLRPHLARFAQRPLALLAWALLQGTSVNA), serve as a signal peptide directing secretion.

Belongs to the LptD family. As to quaternary structure, component of the lipopolysaccharide transport and assembly complex. Interacts with LptE and LptA.

It is found in the cell outer membrane. Functionally, together with LptE, is involved in the assembly of lipopolysaccharide (LPS) at the surface of the outer membrane. The sequence is that of LPS-assembly protein LptD from Albidiferax ferrireducens (strain ATCC BAA-621 / DSM 15236 / T118) (Rhodoferax ferrireducens).